A 31-amino-acid polypeptide reads, in one-letter code: Cytochrome b6-f complex subunit 6 (31 aa).

A helical membrane pass occupies residues 4 to 24 (ILTYFGILFGILTITVIIFVA).

The protein belongs to the PetL family. As to quaternary structure, the 4 large subunits of the cytochrome b6-f complex are cytochrome b6, subunit IV (17 kDa polypeptide, PetD), cytochrome f and the Rieske protein, while the 4 small subunits are PetG, PetL, PetM and PetN. The complex functions as a dimer.

It localises to the plastid. It is found in the chloroplast thylakoid membrane. Its function is as follows. Component of the cytochrome b6-f complex, which mediates electron transfer between photosystem II (PSII) and photosystem I (PSI), cyclic electron flow around PSI, and state transitions. PetL is important for photoautotrophic growth as well as for electron transfer efficiency and stability of the cytochrome b6-f complex. The protein is Cytochrome b6-f complex subunit 6 of Chaetosphaeridium globosum (Charophycean green alga).